Reading from the N-terminus, the 247-residue chain is 2,3-bisphosphoglycerate-dependent phosphoglycerate mutase (247 aa).

Substrate-binding positions include 8-15 (RHGESVWN), 21-22 (TG), arginine 60, 87-90 (ERHY), lysine 98, 114-115 (RR), and 183-184 (GN). Histidine 9 functions as the Tele-phosphohistidine intermediate in the catalytic mechanism. Glutamate 87 serves as the catalytic Proton donor/acceptor.

This sequence belongs to the phosphoglycerate mutase family. BPG-dependent PGAM subfamily. Homodimer.

It catalyses the reaction (2R)-2-phosphoglycerate = (2R)-3-phosphoglycerate. It participates in carbohydrate degradation; glycolysis; pyruvate from D-glyceraldehyde 3-phosphate: step 3/5. Its function is as follows. Catalyzes the interconversion of 2-phosphoglycerate and 3-phosphoglycerate. In Geobacter metallireducens (strain ATCC 53774 / DSM 7210 / GS-15), this protein is 2,3-bisphosphoglycerate-dependent phosphoglycerate mutase.